The sequence spans 149 residues: Large ribosomal subunit protein bL9 (149 aa).

The protein belongs to the bacterial ribosomal protein bL9 family.

Its function is as follows. Binds to the 23S rRNA. The protein is Large ribosomal subunit protein bL9 of Aquifex aeolicus (strain VF5).